A 453-amino-acid chain; its full sequence is GTPase Der (453 aa).

EngA-type G domains lie at 4–169 (PIVA…PPTT) and 177–352 (IKIA…EEHK). Residues 10–17 (GRPNVGKS), 57–61 (DTGGL), 120–123 (NKCE), 183–190 (GRPNVGKS), 230–234 (DTAGI), and 295–298 (NKWD) each bind GTP. The KH-like domain occupies 353-438 (RRVSTSVINE…PIRLLWRSKK (86 aa)).

Belongs to the TRAFAC class TrmE-Era-EngA-EngB-Septin-like GTPase superfamily. EngA (Der) GTPase family. In terms of assembly, associates with the 50S ribosomal subunit.

In terms of biological role, GTPase that plays an essential role in the late steps of ribosome biogenesis. The chain is GTPase Der from Trichormus variabilis (strain ATCC 29413 / PCC 7937) (Anabaena variabilis).